The chain runs to 75 residues: MNSKYLFVFLILIVTFTDLCQGFLVGILPRMRGFITPFLKKVRGRRELGSQYDYLQDFRKRELDLDDLLSKFPDY.

An N-terminal signal peptide occupies residues 1–22 (MNSKYLFVFLILIVTFTDLCQG). The residue at position 43 (Arg-43) is an Arginine amide. A propeptide spanning residues 47–75 (ELGSQYDYLQDFRKRELDLDDLLSKFPDY) is cleaved from the precursor.

This sequence belongs to the non-disulfide-bridged peptide (NDBP) superfamily. Short antimicrobial peptide (group 4) family. In terms of tissue distribution, expressed by the venom gland.

It is found in the secreted. The sequence is that of Peptide Ctri10033 from Chaerilus tricostatus (Scorpion).